Consider the following 201-residue polypeptide: Large ribosomal subunit protein uL4 (201 aa).

The segment at 39 to 67 is disordered; that stretch reads ARQGSRAQKTRSEVAGGGRKPWKQKGSGR.

Belongs to the universal ribosomal protein uL4 family. As to quaternary structure, part of the 50S ribosomal subunit.

In terms of biological role, one of the primary rRNA binding proteins, this protein initially binds near the 5'-end of the 23S rRNA. It is important during the early stages of 50S assembly. It makes multiple contacts with different domains of the 23S rRNA in the assembled 50S subunit and ribosome. Its function is as follows. Forms part of the polypeptide exit tunnel. The chain is Large ribosomal subunit protein uL4 from Marinomonas sp. (strain MWYL1).